Reading from the N-terminus, the 159-residue chain is 2-amino-4-hydroxy-6-hydroxymethyldihydropteridine pyrophosphokinase (159 aa).

This sequence belongs to the HPPK family. Monomer.

The enzyme catalyses 6-hydroxymethyl-7,8-dihydropterin + ATP = (7,8-dihydropterin-6-yl)methyl diphosphate + AMP + H(+). It participates in cofactor biosynthesis; tetrahydrofolate biosynthesis; 2-amino-4-hydroxy-6-hydroxymethyl-7,8-dihydropteridine diphosphate from 7,8-dihydroneopterin triphosphate: step 4/4. Functionally, catalyzes the transfer of pyrophosphate from adenosine triphosphate (ATP) to 6-hydroxymethyl-7,8-dihydropterin, an enzymatic step in folate biosynthesis pathway. In Escherichia coli (strain K12), this protein is 2-amino-4-hydroxy-6-hydroxymethyldihydropteridine pyrophosphokinase (folK).